The primary structure comprises 777 residues: MEPKEATGKENMVTKKKNLAFLRSRLYMLERRKTDTVVESSVSGDHSGTLRRSQSDRTEYNQKLQEKMTPQGECSVAETLTPEEEHHMKRMMAKREKIIKELIQTEKDYLNDLELCVREVVQPLRNKKTDRLDVDSLFSNIESVHQISAKLLSLLEEATTDVEPAMQVIGEVFLQIKGPLEDIYKIYCYHHDEAHSILESYEKEEELKEHLSHCIQSLKKIYMQEGKPNLLDMGSLMIKPIQRVMKYPLLLCELRNSTPPSHPDYRALDDAFAAVKDINVNINELKRRKDLVLKYKKNDEDESLKDKLSKLNIHSISKKSKRVTNHLKILTRGESQVKDNTFNREEKLFRALEKTVRLCVKNISLCLQHIQDAMPLALQSVMDLQEISYNKDDEMDYSETLSNALNSCHDFASHLQRLILTPLSALLSLFPGPHKLIQKRYDKLLDCNSYLQRSTGEESDLAKKEYEALNAQLVEELQAFNQAARKILLNCLCSFITLLRDLMLVAQQAYSTLVPMPLLVSSISEIQNQVLEEIQNLNCVKENSATFIERKLSFEKKKPVQILPEMPHQTDIHRSKLLSTYSAEELYQAKRKCNATQEYDINLLEGDLVAVIEQKDPLGSTSRWLVDTGNVKGYVYSSFLKPYNPAKMQKVDAENRFCDDDFENISLFVSSRPASDSVTGTSESSIGDSSSSLSGTCGKFETNGTDVDSFQEVDEQIFYAVHAFQARSDHELSLQEYQRVHILRFCDLSGNKEWWLAEAQGQKGYVPANYLGKMTYA.

Thr34 carries the phosphothreonine modification. A disordered region spans residues 35–72 (DTVVESSVSGDHSGTLRRSQSDRTEYNQKLQEKMTPQG). A compositionally biased stretch (polar residues) spans 37 to 52 (VVESSVSGDHSGTLRR). Over residues 53 to 66 (SQSDRTEYNQKLQE) the composition is skewed to basic and acidic residues. One can recognise a DH domain in the interval 94-285 (KREKIIKELI…KDINVNINEL (192 aa)). A BAR domain is found at 327–536 (LKILTRGESQ…QNQVLEEIQN (210 aa)). Positions 582 to 645 (SAEELYQAKR…YSSFLKPYNP (64 aa)) constitute an SH3 1 domain. Residues 673–694 (PASDSVTGTSESSIGDSSSSLS) are disordered. Residues 679–694 (TGTSESSIGDSSSSLS) are compositionally biased toward low complexity. One can recognise an SH3 2 domain in the interval 713–776 (VDEQIFYAVH…PANYLGKMTY (64 aa)).

May act as a guanine-nucleotide releasing factor. In Homo sapiens (Human), this protein is Rho guanine nucleotide exchange factor 38 (ARHGEF38).